A 194-amino-acid chain; its full sequence is Extracellular globin-E1 (194 aa).

Globin domains are found at residues 1 to 45 (DISH…MGLS) and 55 to 194 (GLSG…LRQA). Heme b is bound at residue His150.

This sequence belongs to the globin family. In terms of assembly, artemia hemoglobin is a dimer of two similar sized subunits. Each subunit represents a globin chain which exists in two forms (alpha and beta), thus making possible three different phenotypes (HB1, alpha(2), HB2, alpha/beta, HB3, beta(2)). The globin chain is a polymer of eight heme-binding covalently linked domains.

This is Extracellular globin-E1 from Artemia sp. (Brine shrimp).